Consider the following 286-residue polypeptide: Urease accessory protein UreD 2 (286 aa).

The protein belongs to the UreD family. As to quaternary structure, ureD, UreF and UreG form a complex that acts as a GTP-hydrolysis-dependent molecular chaperone, activating the urease apoprotein by helping to assemble the nickel containing metallocenter of UreC. The UreE protein probably delivers the nickel.

Its subcellular location is the cytoplasm. In terms of biological role, required for maturation of urease via the functional incorporation of the urease nickel metallocenter. The chain is Urease accessory protein UreD 2 from Bradyrhizobium sp. (strain ORS 278).